The sequence spans 180 residues: Translation initiation factor IF-3 (180 aa).

It belongs to the IF-3 family. In terms of assembly, monomer.

It is found in the cytoplasm. In terms of biological role, IF-3 binds to the 30S ribosomal subunit and shifts the equilibrium between 70S ribosomes and their 50S and 30S subunits in favor of the free subunits, thus enhancing the availability of 30S subunits on which protein synthesis initiation begins. The chain is Translation initiation factor IF-3 from Pasteurella multocida (strain Pm70).